The chain runs to 302 residues: 4-hydroxy-tetrahydrodipicolinate synthase (302 aa).

T46 contacts pyruvate. Catalysis depends on Y134, which acts as the Proton donor/acceptor. K162 acts as the Schiff-base intermediate with substrate in catalysis. V204 is a binding site for pyruvate.

Belongs to the DapA family. In terms of assembly, homotetramer; dimer of dimers.

It localises to the cytoplasm. The enzyme catalyses L-aspartate 4-semialdehyde + pyruvate = (2S,4S)-4-hydroxy-2,3,4,5-tetrahydrodipicolinate + H2O + H(+). It participates in amino-acid biosynthesis; L-lysine biosynthesis via DAP pathway; (S)-tetrahydrodipicolinate from L-aspartate: step 3/4. Catalyzes the condensation of (S)-aspartate-beta-semialdehyde [(S)-ASA] and pyruvate to 4-hydroxy-tetrahydrodipicolinate (HTPA). This is 4-hydroxy-tetrahydrodipicolinate synthase from Xylella fastidiosa (strain Temecula1 / ATCC 700964).